The chain runs to 402 residues: Mediator of RNA polymerase II transcription subunit 27 (402 aa).

Over residues 1-23 the composition is skewed to polar residues; that stretch reads MQTLHQSQLLQNPAEAANNQSES. The interval 1–30 is disordered; it reads MQTLHQSQLLQNPAEAANNQSESDAPPKQV. Residues 28–49 are a coiled coil; the sequence is KQVAQAMERLNQAARVIADIRL.

This sequence belongs to the Mediator complex subunit 27 family. As to quaternary structure, component of the Mediator complex.

The protein resides in the nucleus. In terms of biological role, component of the Mediator complex, a coactivator involved in the regulated transcription of nearly all RNA polymerase II-dependent genes. Mediator functions as a bridge to convey information from gene-specific regulatory proteins to the basal RNA polymerase II transcription machinery. The Mediator complex, having a compact conformation in its free form, is recruited to promoters by direct interactions with regulatory proteins and serves for the assembly of a functional preinitiation complex with RNA polymerase II and the general transcription factors. The chain is Mediator of RNA polymerase II transcription subunit 27 (MED27) from Arabidopsis thaliana (Mouse-ear cress).